We begin with the raw amino-acid sequence, 327 residues long: Embigin (327 aa).

An N-terminal signal peptide occupies residues 1 to 32 (MRALPGLLEARARTPRLLLLQCLLAAARPSSA). Residues 33–260 (DGSAPDSPFT…ELVVLSYLVP (228 aa)) are Extracellular-facing. Residues N54, N61, N75, N85, N100, N189, N196, N213, and N218 are each glycosylated (N-linked (GlcNAc...) asparagine). 2 consecutive Ig-like V-type domains span residues 71–158 (PVEK…NFKV) and 159–253 (PELH…IELV). Cystine bridges form between C88–C142 and C180–C237. The helical transmembrane segment at 261–281 (LKPFLVIVAEVILLVATILLC) threads the bilayer. Topologically, residues 282 to 327 (EKYTQKKKKHSDEGKEFEQIEQLKSDDSNGIENNVPRHRKNESLGQ) are cytoplasmic. Positions 287 to 327 (KKKKHSDEGKEFEQIEQLKSDDSNGIENNVPRHRKNESLGQ) are disordered. Basic and acidic residues predominate over residues 291-308 (HSDEGKEFEQIEQLKSDD). At S309 the chain carries Phosphoserine.

In terms of assembly, interacts with SLC16A1, SLC16A6 and SLC16A7.

Its subcellular location is the cell membrane. It is found in the synapse. Plays a role in the outgrowth of motoneurons and in the formation of neuromuscular junctions. Following muscle denervation, promotes nerve terminal sprouting and the formation of additional acetylcholine receptor clusters at synaptic sites without affecting terminal Schwann cell number or morphology. Delays the retraction of terminal sprouts following re-innervation of denervated endplates. May play a role in targeting the monocarboxylate transporters SLC16A1, SLC16A6 and SLC16A7 to the cell membrane. This is Embigin (EMB) from Homo sapiens (Human).